The following is a 151-amino-acid chain: MNIFKQTCVGAFAVIFGATSIAPTMAAPLNLERPVINHNVEQVRDHRRPPRHYNGHRPHRPGYWNGHRGYRHYRHGYRRYNDGWWYPLAAFGAGAIIGGAVSQPRPVYRAPRMSNAHVQWCYNRYKSYRSSDNTFQPYNGPRRQCYSPYSR.

Positions 1-26 are cleaved as a signal peptide; it reads MNIFKQTCVGAFAVIFGATSIAPTMA. Residues 83-103 traverse the membrane as a helical segment; it reads GWWYPLAAFGAGAIIGGAVSQ.

This sequence belongs to the BA14k family.

It localises to the cell membrane. Functionally, has immunoglobulin-binding and hemagglutination properties, and can bind to mannose. Essential for virulence. May be involved in LPS biosynthesis or polysaccharide transport. The chain is Lectin-like protein BA14k from Brucella anthropi (strain ATCC 49188 / DSM 6882 / CCUG 24695 / JCM 21032 / LMG 3331 / NBRC 15819 / NCTC 12168 / Alc 37) (Ochrobactrum anthropi).